The following is a 142-amino-acid chain: Hemoglobin subunit theta-1 (142 aa).

The Globin domain occupies 2-142 (ALSAEDRALV…VISALASEYR (141 aa)). Heme b is bound by residues His-59 and His-88.

Belongs to the globin family.

This Pongo pygmaeus (Bornean orangutan) protein is Hemoglobin subunit theta-1 (HBQ1).